We begin with the raw amino-acid sequence, 474 residues long: Phosphomannomutase (474 aa).

The active-site Phosphoserine intermediate is the Ser-101. Positions 101, 242, 244, and 246 each coordinate Mg(2+).

It belongs to the phosphohexose mutase family. The cofactor is Mg(2+).

The enzyme catalyses alpha-D-mannose 1-phosphate = D-mannose 6-phosphate. This chain is Phosphomannomutase (noeK), found in Sinorhizobium fredii (strain NBRC 101917 / NGR234).